A 274-amino-acid chain; its full sequence is 3-methyl-2-oxobutanoate hydroxymethyltransferase (274 aa).

Mg(2+)-binding residues include Asp50 and Asp89. Residues 50–51 (DS), Asp89, and Lys119 each bind 3-methyl-2-oxobutanoate. Glu121 is a binding site for Mg(2+). Glu188 serves as the catalytic Proton acceptor.

The protein belongs to the PanB family. As to quaternary structure, homodecamer; pentamer of dimers. It depends on Mg(2+) as a cofactor.

The protein resides in the cytoplasm. The enzyme catalyses 3-methyl-2-oxobutanoate + (6R)-5,10-methylene-5,6,7,8-tetrahydrofolate + H2O = 2-dehydropantoate + (6S)-5,6,7,8-tetrahydrofolate. Its pathway is cofactor biosynthesis; (R)-pantothenate biosynthesis; (R)-pantoate from 3-methyl-2-oxobutanoate: step 1/2. Its function is as follows. Catalyzes the reversible reaction in which hydroxymethyl group from 5,10-methylenetetrahydrofolate is transferred onto alpha-ketoisovalerate to form ketopantoate. The polypeptide is 3-methyl-2-oxobutanoate hydroxymethyltransferase (Methylorubrum extorquens (strain PA1) (Methylobacterium extorquens)).